The primary structure comprises 643 residues: Mitochondrial Rho GTPase 2 (643 aa).

At 1–611 (MMLGGKSSAG…SGRRSRNIRQ (611 aa)) the chain is on the cytoplasmic side. The region spanning 12–179 (RTSLRVAVAG…FYFASKAVLH (168 aa)) is the Miro 1 domain. EF-hand domains follow at residues 195–230 (RLRR…CFGA) and 315–350 (EAMD…APDS). 8 residues coordinate Ca(2+): D208, D210, D212, E219, D328, D330, D332, and E339. The 170-residue stretch at 423 to 592 (RNVFQCFVFG…FSRIVSTAEN (170 aa)) folds into the Miro 2 domain. The helical transmembrane segment at 612–632 (LVNSSLLFVSVGTAVGFAGLA) threads the bilayer. At 633–643 (AYRAYSARKNA) the chain is on the mitochondrial intermembrane side.

The protein belongs to the mitochondrial Rho GTPase family. In terms of tissue distribution, expressed roots, rosette and cauline leaves, stems, flowers and siliques.

The protein resides in the mitochondrion outer membrane. Activated by calcium. Its function is as follows. Calcium-binding mitochondrial GTPase involved in calcium signaling during salt stress response. May play a role in the progression of embryonic cell division, development of haploid male and female gametes, and pollen tube growth. The chain is Mitochondrial Rho GTPase 2 from Arabidopsis thaliana (Mouse-ear cress).